Reading from the N-terminus, the 514-residue chain is Flagellin B (514 aa).

The protein belongs to the bacterial flagellin family. Heteromer of FlaA and FlaB. FlaB is located proximal to the hook while the remainder of the filament is composed of the predominant FlaA.

It is found in the secreted. The protein localises to the bacterial flagellum. In terms of biological role, flagellin is the subunit protein which polymerizes to form the filaments of bacterial flagella. Important for motility and virulence. This Helicobacter pylori (strain ATCC 700392 / 26695) (Campylobacter pylori) protein is Flagellin B (flaB).